The primary structure comprises 418 residues: rRNA methyltransferase 3, mitochondrial (418 aa).

The transit peptide at 1-40 directs the protein to the mitochondrion; it reads MAAPAKGMWCSLGSLLRVVQTRDLNARRWVRALRRSPVRV. The segment at 41 to 90 is disordered; it reads LSPSGQVEERKRAPDQQPRKAVPKASSQGQRQKQPLETSPSQTPHTWEEA. Residues 47–58 show a composition bias toward basic and acidic residues; the sequence is VEERKRAPDQQP. Residues 65–85 show a composition bias toward polar residues; sequence ASSQGQRQKQPLETSPSQTPH. Residues Gly-354, Ile-378, and Leu-387 each contribute to the S-adenosyl-L-methionine site.

Belongs to the class IV-like SAM-binding methyltransferase superfamily. RNA methyltransferase TrmH family.

It localises to the mitochondrion. The catalysed reaction is guanosine(1370) in 16S rRNA + S-adenosyl-L-methionine = 2'-O-methylguanosine(1370) in 16S rRNA + S-adenosyl-L-homocysteine + H(+). S-adenosyl-L-methionine-dependent 2'-O-ribose methyltransferase that catalyzes the formation of 2'-O-methylguanosine at position 1370 (Gm1370) in the 16S mitochondrial large subunit ribosomal RNA (mtLSU rRNA), a conserved modification in the peptidyl transferase domain of the mtLSU rRNA. Also required for formation of 2'-O-methyluridine at position 1369 (Um1369) mediated by MRM2. The protein is rRNA methyltransferase 3, mitochondrial of Mus musculus (Mouse).